Consider the following 661-residue polypeptide: Envelope glycoprotein (661 aa).

Residues 1–33 (MEGPAFSKSPKDKTIERAFLGVLGILFVTGGLA) form the signal peptide. A receptor-binding domain (RBD) region spans residues 32-267 (LASRDNPHQV…KVTDLGPRVP (236 aa)). Topologically, residues 34–606 (SRDNPHQVYN…FNRSPWFTTL (573 aa)) are extracellular. An N-linked (GlcNAc...) asparagine; by host glycan is attached at asparagine 43. Intrachain disulfides connect cysteine 77–cysteine 129, cysteine 103–cysteine 118, cysteine 104–cysteine 114, cysteine 152–cysteine 172, and cysteine 164–cysteine 177. A Zn(2+)-binding site is contributed by histidine 86. Aspartate 117 provides a ligand contact to Zn(2+). A glycan (N-linked (GlcNAc...) asparagine; by host) is linked at asparagine 199. Cysteine 209 and cysteine 215 are disulfide-bonded. The interval 268–308 (IGPNPVLSDQRPPSRPVPARPPPPSASPSTPTIPPQQGTGD) is disordered. The segment covering 280-301 (PSRPVPARPPPPSASPSTPTIP) has biased composition (pro residues). A glycan (N-linked (GlcNAc...) asparagine; by host) is linked at asparagine 322. Cystine bridges form between cysteine 332-cysteine 335, cysteine 332-cysteine 559, cysteine 362-cysteine 416, cysteine 381-cysteine 393, cysteine 423-cysteine 436, and cysteine 551-cysteine 558. The CXXC signature appears at 332 to 335 (CWLC). An N-linked (GlcNAc...) asparagine; by host glycan is attached at asparagine 361. N-linked (GlcNAc...) asparagine; by host glycosylation is found at asparagine 394 and asparagine 430. The tract at residues 468 to 488 (VSLTLALLPEGLTMGGIAAGV) is fusion peptide. Positions 497 to 533 (ATQQFQQLQAAMHNDLKEVEKSITNLEKSLTSLSEVV) form a coiled coil. The tract at residues 534-550 (LQNRRGLDLLFLKEGGL) is immunosuppression. The CX6CC motif lies at 551–559 (CAALKEECC). The chain crosses the membrane as a helical span at residues 607–627 (ISTIMGPLIVLLLILLFGPCI). Residue cysteine 626 is the site of S-palmitoyl cysteine; by host attachment. The Cytoplasmic segment spans residues 628–661 (LNRLVQFVKDRISVVQALVLTQQYHQLKPIEYEP). The YXXL motif; contains endocytosis signal motif lies at 651–654 (YHQL).

As to quaternary structure, the mature envelope protein (Env) consists of a trimer of SU-TM heterodimers attached by a labile interchain disulfide bond. Post-translationally, specific enzymatic cleavages in vivo yield mature proteins. Envelope glycoproteins are synthesized as an inactive precursor that is N-glycosylated and processed likely by host cell furin or by a furin-like protease in the Golgi to yield the mature SU and TM proteins. The cleavage site between SU and TM requires the minimal sequence [KR]-X-[KR]-R. The R-peptide is released from the C-terminus of the cytoplasmic tail of the TM protein upon particle formation as a result of proteolytic cleavage by the viral protease. Cleavage of this peptide is required for TM to become fusogenic. The CXXC motif is highly conserved across a broad range of retroviral envelope proteins. It is thought to participate in the formation of a labile disulfide bond possibly with the CX6CC motif present in the transmembrane protein. Isomerization of the intersubunit disulfide bond to an SU intrachain disulfide bond is thought to occur upon receptor recognition in order to allow membrane fusion. In terms of processing, the transmembrane protein is palmitoylated. Post-translationally, the R-peptide is palmitoylated.

The protein localises to the virion membrane. It is found in the host cell membrane. Its function is as follows. The surface protein (SU) attaches the virus to the host cell by binding to its receptor. This interaction triggers the refolding of the transmembrane protein (TM) and is thought to activate its fusogenic potential by unmasking its fusion peptide. Fusion occurs at the host cell plasma membrane. The transmembrane protein (TM) acts as a class I viral fusion protein. Under the current model, the protein has at least 3 conformational states: pre-fusion native state, pre-hairpin intermediate state, and post-fusion hairpin state. During viral and target cell membrane fusion, the coiled coil regions (heptad repeats) assume a trimer-of-hairpins structure, positioning the fusion peptide in close proximity to the C-terminal region of the ectodomain. The formation of this structure appears to drive apposition and subsequent fusion of viral and target cell membranes. Membranes fusion leads to delivery of the nucleocapsid into the cytoplasm. In Mus musculus (Mouse), this protein is Envelope glycoprotein (env).